Here is a 189-residue protein sequence, read N- to C-terminus: Segregation and condensation protein B (189 aa).

This sequence belongs to the ScpB family. As to quaternary structure, homodimer. Homodimerization may be required to stabilize the binding of ScpA to the Smc head domains. Component of a cohesin-like complex composed of ScpA, ScpB and the Smc homodimer, in which ScpA and ScpB bind to the head domain of Smc. The presence of the three proteins is required for the association of the complex with DNA.

Its subcellular location is the cytoplasm. In terms of biological role, participates in chromosomal partition during cell division. May act via the formation of a condensin-like complex containing Smc and ScpA that pull DNA away from mid-cell into both cell halves. The polypeptide is Segregation and condensation protein B (Clostridium tetani (strain Massachusetts / E88)).